Reading from the N-terminus, the 770-residue chain is Capsid protein (770 aa).

2 disordered regions span residues glutamine 645–serine 682 and tryptophan 697–valine 717. Polar residues predominate over residues arginine 646–isoleucine 656. The segment covering arginine 666 to glutamate 681 has biased composition (basic and acidic residues). Residues glutamate 703–valine 717 show a composition bias toward low complexity.

This sequence belongs to the anelloviridae capsid protein family.

The protein resides in the virion. Functionally, self-assembles to form an icosahedral capsid with a T=1 symmetry, about 30 nm in diameter, and consisting of 60 capsid proteins. The capsid encapsulates the genomic DNA. Capsid protein is involved in attachment and entry into the host cell. The protein is Capsid protein of Homo sapiens (Human).